Consider the following 102-residue polypeptide: DNA/RNA-binding protein Alba 2 (102 aa).

Positions 10, 13, 40, 42, 43, 46, and 86 each coordinate DNA.

This sequence belongs to the histone-like Alba family. Forms homodimers and homotetramers; oligomerization is enhanced and stabilized by DNA. Interacts with Alba 1.

The protein localises to the cytoplasm. It localises to the chromosome. Functionally, binds double-stranded DNA tightly but without sequence specificity. Involved in DNA compaction. The sequence is that of DNA/RNA-binding protein Alba 2 from Aeropyrum pernix (strain ATCC 700893 / DSM 11879 / JCM 9820 / NBRC 100138 / K1).